The sequence spans 557 residues: Dihydroxy-acid dehydratase (557 aa).

Residue Cys49 participates in [2Fe-2S] cluster binding. Asp81 contributes to the Mg(2+) binding site. A [2Fe-2S] cluster-binding site is contributed by Cys122. Residues Asp123 and Lys124 each contribute to the Mg(2+) site. Position 124 is an N6-carboxylysine (Lys124). Cys194 contributes to the [2Fe-2S] cluster binding site. Glu446 is a binding site for Mg(2+). Residue Ser472 is the Proton acceptor of the active site.

The protein belongs to the IlvD/Edd family. Homodimer. Requires [2Fe-2S] cluster as cofactor. The cofactor is Mg(2+).

The catalysed reaction is (2R)-2,3-dihydroxy-3-methylbutanoate = 3-methyl-2-oxobutanoate + H2O. It carries out the reaction (2R,3R)-2,3-dihydroxy-3-methylpentanoate = (S)-3-methyl-2-oxopentanoate + H2O. Its pathway is amino-acid biosynthesis; L-isoleucine biosynthesis; L-isoleucine from 2-oxobutanoate: step 3/4. It functions in the pathway amino-acid biosynthesis; L-valine biosynthesis; L-valine from pyruvate: step 3/4. In terms of biological role, functions in the biosynthesis of branched-chain amino acids. Catalyzes the dehydration of (2R,3R)-2,3-dihydroxy-3-methylpentanoate (2,3-dihydroxy-3-methylvalerate) into 2-oxo-3-methylpentanoate (2-oxo-3-methylvalerate) and of (2R)-2,3-dihydroxy-3-methylbutanoate (2,3-dihydroxyisovalerate) into 2-oxo-3-methylbutanoate (2-oxoisovalerate), the penultimate precursor to L-isoleucine and L-valine, respectively. The sequence is that of Dihydroxy-acid dehydratase from Prochlorococcus marinus (strain MIT 9301).